The primary structure comprises 81 residues: Sulfur carrier protein TusA (81 aa).

Cys19 acts as the Cysteine persulfide intermediate in catalysis.

Belongs to the sulfur carrier protein TusA family. In terms of assembly, interacts with IscS.

The protein resides in the cytoplasm. It functions in the pathway tRNA modification. Sulfur carrier protein involved in sulfur trafficking in the cell. Part of a sulfur-relay system required for 2-thiolation during synthesis of 2-thiouridine of the modified wobble base 5-methylaminomethyl-2-thiouridine (mnm(5)s(2)U) in tRNA. Interacts with IscS and stimulates its cysteine desulfurase activity. Accepts an activated sulfur from IscS, which is then transferred to TusD, and thus determines the direction of sulfur flow from IscS to 2-thiouridine formation. Also appears to be involved in sulfur transfer for the biosynthesis of molybdopterin. This Salmonella choleraesuis (strain SC-B67) protein is Sulfur carrier protein TusA.